We begin with the raw amino-acid sequence, 251 residues long: Flagellar L-ring protein (251 aa).

Positions M1–A17 are cleaved as a signal peptide. C18 is lipidated: N-palmitoyl cysteine. Residue C18 is the site of S-diacylglycerol cysteine attachment.

Belongs to the FlgH family. In terms of assembly, the basal body constitutes a major portion of the flagellar organelle and consists of four rings (L,P,S, and M) mounted on a central rod.

The protein localises to the cell outer membrane. It localises to the bacterial flagellum basal body. Its function is as follows. Assembles around the rod to form the L-ring and probably protects the motor/basal body from shearing forces during rotation. The protein is Flagellar L-ring protein of Maricaulis maris (strain MCS10) (Caulobacter maris).